The sequence spans 121 residues: MVRATGSVASRRRRKRILKQAKGFWGDRKGHIRQSRSSVMRAMAFNYMHRKDRKGDFRSLWIARLNVASRINGLSYSRLINGLKCAGIELNRKMLSEMAIHNPQGFAEVANQAKKALEATV.

Belongs to the bacterial ribosomal protein bL20 family.

Binds directly to 23S ribosomal RNA and is necessary for the in vitro assembly process of the 50S ribosomal subunit. It is not involved in the protein synthesizing functions of that subunit. The protein is Large ribosomal subunit protein bL20 of Chlamydia felis (strain Fe/C-56) (Chlamydophila felis).